Here is a 250-residue protein sequence, read N- to C-terminus: FAS1 domain-containing protein AER383W (250 aa).

The first 18 residues, 1 to 18 (MRLKTILLGFCAFHVARS), serve as a signal peptide directing secretion. The 161-residue stretch at 87–247 (GVTLDDRLQS…GIVLVIDSSL (161 aa)) folds into the FAS1 domain.

It localises to the vacuole. This chain is FAS1 domain-containing protein AER383W, found in Eremothecium gossypii (strain ATCC 10895 / CBS 109.51 / FGSC 9923 / NRRL Y-1056) (Yeast).